The following is a 459-amino-acid chain: Transcription factor mlcR (459 aa).

The zn(2)-C6 fungal-type DNA-binding region spans 21 to 53 (CDRCHAQKLKCTGSNANLVRAQCQRCQQAGLRC). Disordered stretches follow at residues 64 to 84 (LHKEAAAGTTRATETSQPMTA) and 135 to 170 (DPESFPGGWPQPNTFRDDANSNESSGIPDLGYDFEG). The segment covering 69–78 (AAGTTRATET) has biased composition (low complexity).

The protein resides in the nucleus. In terms of biological role, transcription factor that regulates the gene cluster that mediates the biosynthesis of compactin, also known as mevastatin or ML-236B, and which acts as a potent competitive inhibitor of HMG-CoA reductase. Binds to the consensus-binding motif 5'-WCGG-N(6)-TCGG-3' of target genes. The sequence is that of Transcription factor mlcR from Penicillium citrinum.